A 98-amino-acid chain; its full sequence is NADH-ubiquinone oxidoreductase chain 4L (98 aa).

The next 3 helical transmembrane spans lie at 2-22 (PFIY…LLLF), 30-50 (LLCL…TTLG), and 61-81 (IILM…LVTI).

This sequence belongs to the complex I subunit 4L family. As to quaternary structure, core subunit of respiratory chain NADH dehydrogenase (Complex I) which is composed of 45 different subunits.

The protein localises to the mitochondrion inner membrane. It catalyses the reaction a ubiquinone + NADH + 5 H(+)(in) = a ubiquinol + NAD(+) + 4 H(+)(out). Functionally, core subunit of the mitochondrial membrane respiratory chain NADH dehydrogenase (Complex I) which catalyzes electron transfer from NADH through the respiratory chain, using ubiquinone as an electron acceptor. Part of the enzyme membrane arm which is embedded in the lipid bilayer and involved in proton translocation. This chain is NADH-ubiquinone oxidoreductase chain 4L (MT-ND4L), found in Bradypus tridactylus (Pale-throated three-toed sloth).